A 175-amino-acid chain; its full sequence is Small ribosomal subunit protein mS38 (175 aa).

The protein belongs to the mitochondrion-specific ribosomal protein mS38 family. Component of the mitochondrial small ribosomal subunit (mt-SSU). Mature yeast 74S mitochondrial ribosomes consist of a small (37S) and a large (54S) subunit. The 37S small subunit contains a 15S ribosomal RNA (15S mt-rRNA) and at least 32 different proteins. The 54S large subunit contains a 21S rRNA (21S mt-rRNA) and at least 45 different proteins.

The protein resides in the mitochondrion. Its subcellular location is the mitochondrion inner membrane. In terms of biological role, component of the mitochondrial ribosome (mitoribosome), a dedicated translation machinery responsible for the synthesis of mitochondrial genome-encoded proteins, including at least some of the essential transmembrane subunits of the mitochondrial respiratory chain. The mitoribosomes are attached to the mitochondrial inner membrane and translation products are cotranslationally integrated into the membrane. mS38 is also involved in the splicing of the COX1 mRNA. The chain is Small ribosomal subunit protein mS38 (cox24) from Schizosaccharomyces pombe (strain 972 / ATCC 24843) (Fission yeast).